We begin with the raw amino-acid sequence, 356 residues long: cGAMP-activated phospholipase (356 aa).

The PNPLA domain occupies leucine 15–leucine 206. The GXGXXG motif lies at glycine 19–glycine 24. The GXSXG signature appears at glycine 58 to glycine 62. The active-site Nucleophile is serine 60. The active-site Proton acceptor is aspartate 193. The DGA/G motif lies at aspartate 193–glycine 195.

Belongs to the patatin family.

The enzyme catalyses a 1,2-diacyl-sn-glycero-3-phosphocholine + H2O = a 2-acyl-sn-glycero-3-phosphocholine + a fatty acid + H(+). The catalysed reaction is 1,2-di-(9Z-octadecenoyl)-sn-glycero-3-phosphoethanolamine + 2 H2O = sn-glycero-3-phosphoethanolamine + 2 (9Z)-octadecenoate + 2 H(+). With respect to regulation, phospholipase activity is specifically activated upon 3',3'-cGAMP binding, which is produced by the cognate cyclic nucleotide synthase encoded in the same operon. Its function is as follows. Effector phospholipase of a CBASS antiviral system. CBASS (cyclic oligonucleotide-based antiphage signaling system) provides immunity against bacteriophages. The CD-NTase protein (DncV) synthesizes cyclic nucleotides in response to infection; these serve as specific second messenger signals. The signals activate a diverse range of effectors, leading to bacterial cell death and thus abortive phage infection. A type II-A(GA) CBASS system. Phospholipase that is activated upon binding to the cyclic dinucleotide (CDN) second messenger 3',3'-cyclic GMP-AMP (cGAMP). Degrades phospholipids in the cell membrane. Functionally, protects E.coli against phage infection. When capV and dncV are introduced in E.coli MG1655 there is 1000-fold protection against phage P1; protection against other phage (T2, T4, T5, T6 and lambda-vir) requires the 2 subsequent genes (cap2 and cap3). Upon P1 phage infection the activating molecule is produced between 30 and 40 minutes. Activation leads to bacterial cell lysis and death, which occurs before the phage has finished its replication cycle, thus protecting non-infected bacteria by aborting the phage infection and preventing its propagation. In another paper the capV-dncV-cap2-cap3 operon gives 10(4)-10(5)-fold protection against phages lambda, T2, T4 and T6, about 1000-fold protection against P1 and 10-fold protection against T5. This chain is cGAMP-activated phospholipase, found in Escherichia coli (strain TW11681).